The sequence spans 36 residues: Collagen alpha-2(I) chain (36 aa).

The tract at residues 1–36 (GSNGEPGSAGPPGPAGLRGLPGESGAVGPAGPPGSR) is disordered. P6 and P12 each carry 4-hydroxyproline. A compositionally biased stretch (low complexity) spans 15–29 (AGLRGLPGESGAVGP). P33 bears the 4-hydroxyproline mark.

Belongs to the fibrillar collagen family. In terms of assembly, trimers of one alpha 2(I) and two alpha 1(I) chains. Post-translationally, proline residues at the third position of the tripeptide repeating unit (G-X-Y) are hydroxylated in some or all of the chains.

It localises to the secreted. It is found in the extracellular space. The protein localises to the extracellular matrix. Type I collagen is a member of group I collagen (fibrillar forming collagen). The sequence is that of Collagen alpha-2(I) chain from Brachylophosaurus canadensis (Campanian hadrosaur).